Here is a 392-residue protein sequence, read N- to C-terminus: MSVSHSSRLNKGVREQYMKLPQGEKVQVTYVWIDGTGEGVRCKTRTLDQEPKTIDEIPEWNFDGSSTHQAEGSNSDMYLIPVQMFRDPFCLDPNKLVMCEVLKYNRKSAETNLRHTCKKIMEMVNDHRPWFGMEQEYTLLGINGHPYGWPENGFPGPQGPYYCGVGADKVYGRDVVESHYKACLYAGIKICGTNAEVMPSQWEFQVGPCEGIDMGDHLWMARFILHRVCEDFGVVATLDPKPMTGNWNGAGCHTNYSTESMRVEGGLKHIEDAIEKLGKRHDYHICVYDPRGGKDNSRRLTGQHETSSIHEFSAGVANRGASIRIPRQVGQEGYGYFEDRRPAANCDPYAVTEALVRTTILNETGSETKDYKNGAGFSRAIGMASPRDAAVF.

The 81-residue stretch at valine 26 to arginine 106 folds into the GS beta-grasp domain. Residues leucine 113–phenylalanine 392 form the GS catalytic domain. ATP is bound at residue glutamate 134. Residues glutamate 134, glutamate 136, glutamate 196, and glutamate 203 each contribute to the Mn(2+) site. Glutamate 203–proline 208 contacts ATP. Residue asparagine 246–tryptophan 247 participates in L-glutamate binding. Histidine 253 provides a ligand contact to Mn(2+). ATP contacts are provided by residues asparagine 255–serine 257, arginine 319, and arginine 324. Arginine 319 serves as a coordination point for L-glutamate. Tyrosine 336–glutamate 338 serves as a coordination point for ADP. Residue glutamate 338 participates in Mn(2+) binding. An L-glutamate-binding site is contributed by arginine 340.

This sequence belongs to the glutamine synthetase family. Requires Mg(2+) as cofactor. Mn(2+) serves as cofactor.

The protein localises to the cytoplasm. It is found in the cytosol. Its subcellular location is the microsome. It localises to the mitochondrion. The catalysed reaction is L-glutamate + NH4(+) + ATP = L-glutamine + ADP + phosphate + H(+). Functionally, glutamine synthetase that catalyzes the ATP-dependent conversion of glutamate and ammonia to glutamine. The sequence is that of Glutamine synthetase from Xenopus laevis (African clawed frog).